We begin with the raw amino-acid sequence, 210 residues long: uncharacterized protein (210 aa).

This is an uncharacterized protein from Acanthamoeba polyphaga (Amoeba).